A 178-amino-acid polypeptide reads, in one-letter code: MSRIGNKVIVLPAGVEITNNDNVVTVKGPKGELTREFSKDIEIRVEGTEVTLHRPNDSKEMKTIHGTTRALLNNMVIGVSEGFKKELEMRGVGYRAQLQGKKLVLAVGKSHPDEVEAPEGITFELPNPTTIVISGISKEAVGQTAAYVRSLRAPEPYKGKGIRYVGEFVRRKEGKTGK.

It belongs to the universal ribosomal protein uL6 family. As to quaternary structure, part of the 50S ribosomal subunit.

In terms of biological role, this protein binds to the 23S rRNA, and is important in its secondary structure. It is located near the subunit interface in the base of the L7/L12 stalk, and near the tRNA binding site of the peptidyltransferase center. This Streptococcus gordonii (strain Challis / ATCC 35105 / BCRC 15272 / CH1 / DL1 / V288) protein is Large ribosomal subunit protein uL6.